We begin with the raw amino-acid sequence, 227 residues long: Phosphatidylserine decarboxylase proenzyme (227 aa).

Catalysis depends on S181, which acts as the Schiff-base intermediate with substrate; via pyruvic acid. Position 181 is a pyruvic acid (Ser); by autocatalysis (S181).

It belongs to the phosphatidylserine decarboxylase family. PSD-A subfamily. Heterodimer of a large membrane-associated beta subunit and a small pyruvoyl-containing alpha subunit. Requires pyruvate as cofactor. In terms of processing, is synthesized initially as an inactive proenzyme. Formation of the active enzyme involves a self-maturation process in which the active site pyruvoyl group is generated from an internal serine residue via an autocatalytic post-translational modification. Two non-identical subunits are generated from the proenzyme in this reaction, and the pyruvate is formed at the N-terminus of the alpha chain, which is derived from the carboxyl end of the proenzyme. The post-translation cleavage follows an unusual pathway, termed non-hydrolytic serinolysis, in which the side chain hydroxyl group of the serine supplies its oxygen atom to form the C-terminus of the beta chain, while the remainder of the serine residue undergoes an oxidative deamination to produce ammonia and the pyruvoyl prosthetic group on the alpha chain.

The protein localises to the cell membrane. The catalysed reaction is a 1,2-diacyl-sn-glycero-3-phospho-L-serine + H(+) = a 1,2-diacyl-sn-glycero-3-phosphoethanolamine + CO2. The protein operates within phospholipid metabolism; phosphatidylethanolamine biosynthesis; phosphatidylethanolamine from CDP-diacylglycerol: step 2/2. Catalyzes the formation of phosphatidylethanolamine (PtdEtn) from phosphatidylserine (PtdSer). The chain is Phosphatidylserine decarboxylase proenzyme from Anaplasma phagocytophilum (strain HZ).